Consider the following 372-residue polypeptide: 18-hydroxynorfluorocurarine reductase (372 aa).

Residues cysteine 47, aspartate 50, histidine 69, glutamate 70, cysteine 100, cysteine 103, cysteine 106, cysteine 114, and cysteine 172 each coordinate Zn(2+). NADP(+)-binding positions include 197 to 202 (GLGGIG), lysine 226, 283 to 285 (LGA), serine 307, and arginine 354.

The protein belongs to the zinc-containing alcohol dehydrogenase family. As to quaternary structure, homodimer. Requires Zn(2+) as cofactor.

The catalysed reaction is (19E)-cur-19-en-17-al + NADP(+) = norfluorocurarine + NADPH + H(+). It catalyses the reaction 17,18-epoxy-17-hydroxycur-19-ene + NADP(+) = 18-hydroxynorfluorocurarine + NADPH + H(+). The protein operates within alkaloid biosynthesis. Functionally, alcohol dehydrogenase involved in the biosynthesis of curare monoterpene indole alkaloids (MIAs), natural products such as diaboline, a pharmacologically active compound used to regulate blood pressure. Curare alkaloids act as animal glycine receptor antagonists. Catalyzes the conversion of norfluorocurarine to desoxy Wieland-Gumlich aldehyde, and of 18-OH norfluorocurarine to Wieland-Gumlich aldehyde. In Strychnos sp, this protein is 18-hydroxynorfluorocurarine reductase.